The following is a 577-amino-acid chain: Arginine--tRNA ligase (577 aa).

The short motif at 122–132 is the 'HIGH' region element; it reads PNVAKEMHVGH.

It belongs to the class-I aminoacyl-tRNA synthetase family. As to quaternary structure, monomer.

The protein localises to the cytoplasm. The enzyme catalyses tRNA(Arg) + L-arginine + ATP = L-arginyl-tRNA(Arg) + AMP + diphosphate. This chain is Arginine--tRNA ligase, found in Aliivibrio fischeri (strain ATCC 700601 / ES114) (Vibrio fischeri).